A 725-amino-acid chain; its full sequence is MFSALKKLVGSEQAPGRDKNIPAGLQSMNQALQRRFAKGVQYNMKIVIRGDRNTGKTALWHRLQGKKFVEEYIPTQEIQVTSIHWNYKTTDDVVKVEVWDVVDKGKCKKRGDGLKTENDPQEAESELALDAEFLDVYKNCNGVVMMFDITKQWTFNYVLRELPKVPTHVPVCVLGNYRDMGEHRVILPDDVRDFIEHLDRPPGSSYFRYAESSMKNSFGLKYLHKFFNIPFLQLQRETLLRQLETNQLDIDATLEELSVQQETEDQNYSIFLEMMEARSRGHASPLAANGQSPSSGSQSPVVPPSAVSTGSSSPSTPQPAPQLSLGVSSTCPSAPSPVPSLEAMPSSVHSSAPAPTPAPAPAPAQRRSIISRLFGTSPAAEVTPSPPEPAPALEAPARVQNVEDFVPEDGLDRSFLEDTSVPKDKKVGAKGPQQDSDSDDGEALGGNPMVAGFQDDVDIEDQTHGKSLLPSDPMPSKNISLSSEEEAEGLAGHPRVAPQQCSEPETKWSSTKVSHPQKKRAPTRGTPPWSDGLTTDDSERPQEGKDKQVSSESDPEGPIAAQMLSFVMDDPDFESDESDTQRRMGRFPVREDLSDVTDEDTGPAQPPPPSKLPGAFRLKNDSDLFGLGLEEMGPKESSDEDRDSKLPSKEKKKKKKKSKEEEEKTTKKKSKHKKSKDKEEGKEDRKKKRKPPRSKEQKAADELEAFLGGGAPGSRHPGGGDYEEL.

At Met1 the chain carries N-acetylmethionine. The interval 39 to 279 is small GTPase-like; it reads GVQYNMKIVI…IFLEMMEARS (241 aa). GTP-binding positions include 50–57, 100–104, and 177–179; these read GDRNTGKT, DVVDK, and YRD. Disordered stretches follow at residues 281-364 and 378-725; these read GHAS…PAPA and PAAE…YEEL. Low complexity-rich tracts occupy residues 291–325 and 343–353; these read QSPS…QLSL and AMPSSVHSSAP. A compositionally biased stretch (basic and acidic residues) spans 410–427; that stretch reads GLDRSFLEDTSVPKDKKV. Ser414, Ser436, Ser438, Ser480, Ser482, Ser483, and Ser502 each carry phosphoserine. Residues 499–514 show a composition bias toward polar residues; the sequence is QQCSEPETKWSSTKVS. The segment covering 537–549 has biased composition (basic and acidic residues); the sequence is DSERPQEGKDKQV. The span at 569 to 578 shows a compositional bias: acidic residues; that stretch reads DDPDFESDES. Residues Ser575 and Ser594 each carry the phosphoserine modification. Thr597 carries the post-translational modification Phosphothreonine. Residues 632–649 show a composition bias toward basic and acidic residues; sequence MGPKESSDEDRDSKLPSK. A phosphoserine mark is found at Ser637, Ser638, and Ser644. The segment at 652–690 is interaction with CDKN2A; it reads KKKKKKSKEEEEKTTKKKSKHKKSKDKEEGKEDRKKKRK. Basic residues predominate over residues 666–675; the sequence is TKKKSKHKKS. Residues 707–725 are compositionally biased toward gly residues; sequence LGGGAPGSRHPGGGDYEEL.

Belongs to the small GTPase superfamily. Rab family.

The protein resides in the nucleus. It is found in the cytoplasm. May enhance cellular proliferation. May reduce growth inhibitory activity of CDKN2A. This Mus musculus (Mouse) protein is Rab-like protein 6 (Rabl6).